A 308-amino-acid polypeptide reads, in one-letter code: Phenylcoumaran benzylic ether reductase 1 (308 aa).

Residues glycine 11–glycine 17, arginine 36, and arginine 45 each bind NADP(+). The Proton acceptor role is filled by lysine 133. Arginine 137 contributes to the NADP(+) binding site.

It belongs to the NmrA-type oxidoreductase family. Isoflavone reductase subfamily. In terms of tissue distribution, expressed in apical meristem and cotyledon veins of young seedlings. Expressed in vascular tissues of roots, leaves, stems and petals. Expressed in pollen grains. Expressed at low levels in cauline leaves and siliques.

It catalyses the reaction (-)-dehydrodiconiferyl alcohol + NADPH + H(+) = (S)-isodihydrodehydrodiconiferyl alcohol + NADP(+). The enzyme catalyses (+)-dehydrodiconiferyl alcohol + NADPH + H(+) = (R)-isodihydrodehydrodiconiferyl alcohol + NADP(+). It carries out the reaction (2R,3S)-dihydrodehydrodiconiferyl alcohol + NADPH + H(+) = (S)-tetrahydrodehydrodiconiferyl alcohol + NADP(+). The catalysed reaction is (2S,3R)-dihydrodehydrodiconiferyl alcohol + NADPH + H(+) = (R)-tetrahydrodehydrodiconiferyl alcohol + NADP(+). Its function is as follows. Oxidoreductase involved in lignan biosynthesis. Catalyzes the NADPH-dependent reduction of phenylcoumaran benzylic ethers. Converts dehydrodiconiferyl alcohol (DDC) to isodihydrodehydrodiconiferyl alcohol (IDDDC), and dihydrodehydrodiconiferyl alcohol (DDDC) to tetrahydrodehydrodiconiferyl alcohol (TDDC). Plays an important role in the biosynthesis of secondary metabolites. In addition to the 8-5'-linked neolignan DDC, can reduce the 8-8'-linked lignans, pinoresinol, and lariciresinol, but with lower activities. The protein is Phenylcoumaran benzylic ether reductase 1 of Arabidopsis thaliana (Mouse-ear cress).